We begin with the raw amino-acid sequence, 416 residues long: Alpha-1-antiproteinase (416 aa).

A signal peptide spans 1–24 (MALSITRGLLLLAALCCLAPTSLA). Residues N68, N105, N143, and N269 are each glycosylated (N-linked (GlcNAc...) asparagine). Residues 371–390 (GATFLEAIPMSLPPDVEFNR) form an RCL region. S381 carries the phosphoserine modification.

It belongs to the serpin family. Interacts with CELA2A. Interacts with ERGIC3 and LMAN1/ERGIC53. Interacts with PRSS1/Trypsin. Plasma.

Its subcellular location is the secreted. Inhibits human leukocyte elastase, pig pancreatic elastase and bovine trypsin on a 1:1 molar basis. The sequence is that of Alpha-1-antiproteinase from Ovis aries (Sheep).